The following is a 774-amino-acid chain: Transcription factor MBS1 (774 aa).

The 107-residue stretch at 37–143 (EITFYDSGVP…YVPTSVSPPP (107 aa)) folds into the HTH APSES-type domain. Residues 68 to 89 (ATQILKVAGFDKPQRTRVLERE) constitute a DNA-binding region (H-T-H motif). 2 disordered regions span residues 135–180 (VPTS…SAAA) and 209–229 (RVSL…VASV). Residues 155–165 (ARRDKEKETGR) are compositionally biased toward basic and acidic residues. A compositionally biased stretch (polar residues) spans 166-176 (TKATPSRTGPT). ANK repeat units follow at residues 348–377 (DGHT…SIFA) and 467–496 (EGET…NPKI). Residues 752-774 (EEENDNQVYNTSAGESGPSSWVQ) are disordered. The segment covering 757-774 (NQVYNTSAGESGPSSWVQ) has biased composition (polar residues).

It localises to the nucleus. Its function is as follows. Transcription factor that positively regulates ergosterol biosynthesis and thereby affects polyene and azole drug susceptibility. Plays a role in maintenance of membrane stability and osmotic stress response. Involved in genotoxic and oxidative stress responses. Also promotes production of melanin and capsule and thereby is required for full virulence. The protein is Transcription factor MBS1 of Cryptococcus neoformans var. grubii serotype A (strain H99 / ATCC 208821 / CBS 10515 / FGSC 9487) (Filobasidiella neoformans var. grubii).